The primary structure comprises 33 residues: MSDIN-like toxin proprotein 1 (33 aa).

The propeptide occupies 1–10; the sequence is MSDINATRLP. Positions 11 to 18 form a cross-link, cyclopeptide (Ile-Pro); the sequence is IIWAPVVP. A propeptide spanning residues 19-33 is cleaved from the precursor; sequence CISDDNDSTLTRGQR.

The protein belongs to the MSDIN fungal toxin family. In terms of processing, processed by the macrocyclase-peptidase enzyme POPB to yield a toxic cyclic octapeptide. POPB first removes 10 residues from the N-terminus. Conformational trapping of the remaining peptide forces the enzyme to release this intermediate rather than proceed to macrocyclization. The enzyme rebinds the remaining peptide in a different conformation and catalyzes macrocyclization of the N-terminal 8 residues.

In terms of biological role, probable toxin that belongs to the MSDIN-like toxin family responsible for a large number of food poisoning cases and deaths. In Amanita fuliginea (East Asian brown death cap), this protein is MSDIN-like toxin proprotein 1.